The primary structure comprises 190 residues: Anthranilate synthase component II (190 aa).

A Glutamine amidotransferase type-1 domain is found at 1–190 (MILIIDNYDS…ENFCTGIAKA (190 aa)). 51-53 (GPG) contacts L-glutamine. Cys-76 acts as the Nucleophile; for GATase activity in catalysis. L-glutamine-binding positions include Gln-80 and 126–127 (SL). Catalysis depends on residues His-167 and Glu-169.

In terms of assembly, tetramer of two components I and two components II.

The enzyme catalyses chorismate + L-glutamine = anthranilate + pyruvate + L-glutamate + H(+). It functions in the pathway amino-acid biosynthesis; L-tryptophan biosynthesis; L-tryptophan from chorismate: step 1/5. The sequence is that of Anthranilate synthase component II (trpG2) from Haloarcula marismortui (strain ATCC 43049 / DSM 3752 / JCM 8966 / VKM B-1809) (Halobacterium marismortui).